A 92-amino-acid chain; its full sequence is Transcription factor PRE5 (92 aa).

Residues 4-59 (RRSRQTSNASRISDDQMIDLVSKLRQFLPEIHERRRSDKVSASKVLQETCNYIRKL) enclose the bHLH domain.

The protein belongs to the bHLH protein family. As to quaternary structure, interacts with IBH1.

The protein resides in the nucleus. Atypical and probable non DNA-binding bHLH transcription factor that integrates multiple signaling pathways to regulate cell elongation and plant development. May have a regulatory role in various aspects of gibberellin-dependent growth and development. The sequence is that of Transcription factor PRE5 (PRE5) from Arabidopsis thaliana (Mouse-ear cress).